The following is a 567-amino-acid chain: Zinc finger protein 512 (567 aa).

Residues 1–32 (MSSRLGAVPATSGPTTFKQQRSTRIVGAKNSR) form a disordered region. Residues 12-23 (SGPTTFKQQRST) are compositionally biased toward polar residues. Glycyl lysine isopeptide (Lys-Gly) (interchain with G-Cter in SUMO2) cross-links involve residues Lys18 and Lys84. The interval 86-148 (AATSHVEGSG…QARRIRKEPP (63 aa)) is disordered. Basic residues predominate over residues 119 to 130 (KKHKLYGRKQRP). The C2H2-type 1 zinc-finger motif lies at 197–220 (FTCHHCGKQLRSLAGMKYHVMANH). A Glycyl lysine isopeptide (Lys-Gly) (interchain with G-Cter in SUMO2) cross-link involves residue Lys227. The C2H2-type 2 zinc finger occupies 287-310 (LKCHHCGKPYRSKAGLAYHLRSEH). A Glycyl lysine isopeptide (Lys-Gly) (interchain with G-Cter in SUMO2) cross-link involves residue Lys333. Residues 406–430 (IQCPNQGCEAVYSSVSGLKAHLGSC) form a C2H2-type 3; atypical zinc finger. The segment at 440-463 (YKCLLCQKEFVSESGVKYHINSVH) adopts a C2H2-type 4 zinc-finger fold. The disordered stretch occupies residues 486-567 (QRQQEEEKRR…PKTNHKRGRK (82 aa)). Basic residues predominate over residues 495 to 508 (RQQHRSRRSLRRRQ). Residues 523-532 (VGKDQRRNNE) show a composition bias toward basic and acidic residues. Residues 556-567 (KPPKTNHKRGRK) are compositionally biased toward basic residues.

This sequence belongs to the krueppel C2H2-type zinc-finger protein family.

The protein resides in the nucleus. Functionally, may be involved in transcriptional regulation. The polypeptide is Zinc finger protein 512 (ZNF512) (Homo sapiens (Human)).